The following is a 213-amino-acid chain: N-(5'-phosphoribosyl)anthranilate isomerase (213 aa).

The protein belongs to the TrpF family.

It catalyses the reaction N-(5-phospho-beta-D-ribosyl)anthranilate = 1-(2-carboxyphenylamino)-1-deoxy-D-ribulose 5-phosphate. It functions in the pathway amino-acid biosynthesis; L-tryptophan biosynthesis; L-tryptophan from chorismate: step 3/5. The protein is N-(5'-phosphoribosyl)anthranilate isomerase of Hahella chejuensis (strain KCTC 2396).